The sequence spans 228 residues: 3-oxoadipate CoA-transferase subunit A (228 aa).

CoA is bound at residue 25–31; the sequence is GGFGTAG.

This sequence belongs to the 3-oxoacid CoA-transferase subunit A family. Heterodimer.

It carries out the reaction 3-oxoadipate + succinyl-CoA = 3-oxoadipyl-CoA + succinate. The protein operates within aromatic compound metabolism; beta-ketoadipate pathway; acetyl-CoA and succinyl-CoA from 3-oxoadipate: step 1/2. In Acinetobacter baylyi (strain ATCC 33305 / BD413 / ADP1), this protein is 3-oxoadipate CoA-transferase subunit A (pcaI).